The primary structure comprises 133 residues: Transcriptional regulator MraZ (133 aa).

SpoVT-AbrB domains follow at residues 5–47 (TYEH…SKDD) and 76–119 (TVEI…SKNK).

It belongs to the MraZ family. As to quaternary structure, forms oligomers.

It is found in the cytoplasm. Its subcellular location is the nucleoid. The sequence is that of Transcriptional regulator MraZ from Mycoplasma mycoides subsp. mycoides SC (strain CCUG 32753 / NCTC 10114 / PG1).